A 557-amino-acid chain; its full sequence is Urocanate hydratase (557 aa).

Residues Met1–Asn20 form a disordered region. Residues Gly52 to Gly53, Gln130, Gly176 to Gly178, Glu196, Arg201, Asn242 to Ala243, Gln263 to His267, Tyr273 to Leu274, and Tyr322 contribute to the NAD(+) site. Residue Cys410 is part of the active site. NAD(+) is bound at residue Gly492.

Belongs to the urocanase family. Requires NAD(+) as cofactor.

The protein localises to the cytoplasm. The enzyme catalyses 4-imidazolone-5-propanoate = trans-urocanate + H2O. It participates in amino-acid degradation; L-histidine degradation into L-glutamate; N-formimidoyl-L-glutamate from L-histidine: step 2/3. Functionally, catalyzes the conversion of urocanate to 4-imidazolone-5-propionate. In Brucella anthropi (strain ATCC 49188 / DSM 6882 / CCUG 24695 / JCM 21032 / LMG 3331 / NBRC 15819 / NCTC 12168 / Alc 37) (Ochrobactrum anthropi), this protein is Urocanate hydratase.